The sequence spans 266 residues: MEVANKTQQKHFVLVHGAGHGAWCWYKLKLLLESSGHKVTAIDLATSGANPKRLDEVDTLKDYCSPLLELMAAIPQDDKVILVGHSYGGFCIALAMDLYPKKISIGVFVASVMPDSTHPPNYFINQYYKWNPVGEDSTDTKVETFGDPDQPRTVIHFGPIYLSTKLYQNCTSEEIELAKFLLRPLSVFSNDLSKLKAFSEEGYGSVRRGYIMCSEDKAVPAGLQHWLIENVGASEVKEIKGADHMPMISKPQELCQCLVEITEKVV.

Positions 11 to 121 constitute an AB hydrolase-1 domain; that stretch reads HFVLVHGAGH…VMPDSTHPPN (111 aa). Residues serine 86, aspartate 216, and histidine 244 contribute to the active site.

The protein belongs to the AB hydrolase superfamily. As to quaternary structure, homodimer.

The enzyme catalyses 17-dehydropreakuammicine + H2O = norfluorocurarine + methanol + CO2. It functions in the pathway alkaloid biosynthesis. Its function is as follows. Hydrolase involved in the biosynthesis of curare monoterpene indole alkaloids (MIAs), natural products such as diaboline, a pharmacologically active compound used to regulate blood pressure. Curare alkaloids act as animal glycine receptor antagonists. Catalyzes the conversion of dehydropreakuammicine to norfluorocurarine. The protein is Norfluorocurarine synthase 2 of Strychnos sp.